A 228-amino-acid polypeptide reads, in one-letter code: Adapter protein MecA (228 aa).

This sequence belongs to the MecA family. In terms of assembly, homodimer.

Its function is as follows. Enables the recognition and targeting of unfolded and aggregated proteins to the ClpC protease or to other proteins involved in proteolysis. The protein is Adapter protein MecA of Lacticaseibacillus paracasei (strain ATCC 334 / BCRC 17002 / CCUG 31169 / CIP 107868 / KCTC 3260 / NRRL B-441) (Lactobacillus paracasei).